A 505-amino-acid chain; its full sequence is Beta-glucosidase 18 (505 aa).

An N-terminal signal peptide occupies residues 1-26 (MAGGSKTRIHASLVSTLLLLLPLASA). Residue glutamine 46 coordinates a beta-D-glucoside. N-linked (GlcNAc...) asparagine glycosylation is present at asparagine 55. A beta-D-glucoside-binding positions include histidine 148 and 193–194 (NE). Glutamate 194 (proton donor) is an active-site residue. An intrachain disulfide couples cysteine 213 to cysteine 220. Residue tyrosine 337 participates in a beta-D-glucoside binding. Cysteines 345 and 350 form a disulfide. A beta-D-glucoside contacts are provided by residues glutamate 408, tryptophan 457, 464-465 (EW), and phenylalanine 473. Catalysis depends on glutamate 408, which acts as the Nucleophile.

Belongs to the glycosyl hydrolase 1 family. In terms of tissue distribution, expressed in roots, leaves, flowers and pollen.

The enzyme catalyses Hydrolysis of terminal, non-reducing beta-D-glucosyl residues with release of beta-D-glucose.. Functionally, hydrolyzes glycosides and monolignol glucosides. Can hydrolyze para-nitrophenyl beta-D-glucopyranoside (pNPGlc) in vitro. Hydrolyzes para-nitrophenyl beta-D-fucopyranoside, para-nitrophenyl beta-D-galactopyranoside and para-nitrophenyl beta-D-xylopyranoside in vitro. Hydrolyzes the monolignol glucosides coniferin and syringin with high catalytic efficiencies. This Oryza sativa subsp. japonica (Rice) protein is Beta-glucosidase 18.